The sequence spans 252 residues: Protein GrpE (252 aa).

Over residues 1–22 (MHNPQSRGHNLSQAMSDQTVTN) the composition is skewed to polar residues. The segment at 1 to 70 (MHNPQSRGHN…EEDQASEATS (70 aa)) is disordered.

The protein belongs to the GrpE family. As to quaternary structure, homodimer.

The protein resides in the cytoplasm. Its function is as follows. Participates actively in the response to hyperosmotic and heat shock by preventing the aggregation of stress-denatured proteins, in association with DnaK and GrpE. It is the nucleotide exchange factor for DnaK and may function as a thermosensor. Unfolded proteins bind initially to DnaJ; upon interaction with the DnaJ-bound protein, DnaK hydrolyzes its bound ATP, resulting in the formation of a stable complex. GrpE releases ADP from DnaK; ATP binding to DnaK triggers the release of the substrate protein, thus completing the reaction cycle. Several rounds of ATP-dependent interactions between DnaJ, DnaK and GrpE are required for fully efficient folding. This is Protein GrpE from Thermosynechococcus vestitus (strain NIES-2133 / IAM M-273 / BP-1).